A 332-amino-acid chain; its full sequence is T-cell surface glycoprotein CD1c2 (332 aa).

Positions 1 to 17 (MLFLQFLFVDVVLGGSI) are cleaved as a signal peptide. Residues 18-300 (TENVVQENIS…IILYWGHGLS (283 aa)) lie on the Extracellular side of the membrane. Asn25, Asn38, and Asn75 each carry an N-linked (GlcNAc...) asparagine glycan. Intrachain disulfides connect Cys120–Cys184 and Cys224–Cys279. The Ig-like domain occupies 205-292 (PEVWLSSSPN…HSSLRDQDII (88 aa)). A helical transmembrane segment spans residues 301-321 (VILIALAVIVPLVLLIVLVLL). Topologically, residues 322 to 332 (CKKRCTYQGIP) are cytoplasmic.

As to quaternary structure, heterodimer with B2M (beta-2-microglobulin).

It localises to the cell membrane. Its subcellular location is the endosome membrane. Antigen-presenting protein that binds self and non-self lipid and glycolipid antigens and presents them to T-cell receptors on natural killer T-cells. The chain is T-cell surface glycoprotein CD1c2 (CD1C2) from Cavia porcellus (Guinea pig).